Reading from the N-terminus, the 244-residue chain is Electron transfer flavoprotein beta subunit lysine methyltransferase homolog (244 aa).

It belongs to the methyltransferase superfamily. ETFBKMT family.

In terms of biological role, probable methyltransferase. The polypeptide is Electron transfer flavoprotein beta subunit lysine methyltransferase homolog (Caenorhabditis elegans).